Consider the following 355-residue polypeptide: Acyl-CoA desaturase 1 (355 aa).

Residues 1 to 68 are Cytoplasmic-facing; it reads MPAHMLQEIS…EGPPPKLEYV (68 aa). Positions 9–20 are enriched in low complexity; it reads ISSSYTTTTTIT. Positions 9–33 are disordered; that stretch reads ISSSYTTTTTITAPPSGNEREKVKT. The helical transmembrane segment at 69–89 threads the bilayer; that stretch reads WRNIILMVLLHLGGLYGIILV. A substrate-binding site is contributed by Asn71. The Lumenal portion of the chain corresponds to 90-93; that stretch reads PSCK. A helical membrane pass occupies residues 94-114; it reads LYTCLFGIFYYMTSALGITAG. The Cytoplasmic segment spans residues 115–213; that stretch reads AHRLWSHRTY…EKLVMFQRRY (99 aa). Fe cation-binding residues include His116 and His121. Positions 116–121 match the Histidine box-1 motif; that stretch reads HRLWSH. Positions 144, 151, and 152 each coordinate substrate. Residues His153, His156, and His157 each coordinate Fe cation. Residues 153–157 carry the Histidine box-2 motif; it reads HRAHH. Positions 184 and 185 each coordinate substrate. A helical membrane pass occupies residues 214 to 233; that stretch reads YKPGLLLMCFILPTLVPWYC. Over 234-237 the chain is Lumenal; it reads WGET. Residues 238–259 traverse the membrane as a helical segment; sequence FVNSLFVSTFLRYTLVLNATWL. Trp258 is a substrate binding site. Topologically, residues 260–355 are cytoplasmic; it reads VNSAAHLYGY…RTGDGSHKSS (96 aa). Fe cation contacts are provided by His265, His294, His297, and His298. Residues 294-298 carry the Histidine box-3 motif; that stretch reads HNYHH.

This sequence belongs to the fatty acid desaturase type 1 family. Fe(2+) serves as cofactor. As to expression, detected in liver (at protein level). Detected in skin and liver. Detected in sebaceous gland, but not in hair follicle. Detected in white and brown adipose tissue, eyelid, Harderian gland, and at lower levels in Meibomian gland, eyeball and adrenal gland. Highly expressed in liver, and detected at low levels in brain, heart, lung, stomach, skeletal muscle and kidney.

The protein localises to the endoplasmic reticulum membrane. It is found in the microsome membrane. The catalysed reaction is octadecanoyl-CoA + 2 Fe(II)-[cytochrome b5] + O2 + 2 H(+) = (9Z)-octadecenoyl-CoA + 2 Fe(III)-[cytochrome b5] + 2 H2O. Stearoyl-CoA desaturase that utilizes O(2) and electrons from reduced cytochrome b5 to introduce the first double bond into saturated fatty acyl-CoA substrates. Catalyzes the insertion of a cis double bond at the Delta-9 position into fatty acyl-CoA substrates including palmitoyl-CoA and stearoyl-CoA. Gives rise to a mixture of 16:1 and 18:1 unsaturated fatty acids. Plays an important role in lipid biosynthesis. Plays an important role in regulating the expression of genes that are involved in lipogenesis and in regulating mitochondrial fatty acid oxidation. Plays an important role in body energy homeostasis. Contributes to the biosynthesis of membrane phospholipids, cholesterol esters and triglycerides. Required for normal development of sebaceous glands. Required for the biosynthesis of normal levels of Delta-9 unsaturated fatty acids and 1-alkyl-2,3-diacylglycerol in the Harderian gland. Required for normal production of meibum, an oily material that prevents drying of the cornea. This is Acyl-CoA desaturase 1 (Scd1) from Mus musculus (Mouse).